A 323-amino-acid polypeptide reads, in one-letter code: Coiled-coil domain-containing protein 160 (323 aa).

The tract at residues 1–81 (MDARRKHWKD…EGEQDSNLRE (81 aa)) is disordered. Residues 48–58 (SNFSVRNTQEG) are compositionally biased toward polar residues. The stretch at 144-289 (LRLHLLNEEL…IKNELRVEKT (146 aa)) forms a coiled coil.

This sequence belongs to the CCDC160 family.

This chain is Coiled-coil domain-containing protein 160 (Ccdc160), found in Mus musculus (Mouse).